A 222-amino-acid chain; its full sequence is Cytidylate kinase (222 aa).

Gly-7–Thr-15 provides a ligand contact to ATP.

It belongs to the cytidylate kinase family. Type 1 subfamily.

It localises to the cytoplasm. It carries out the reaction CMP + ATP = CDP + ADP. It catalyses the reaction dCMP + ATP = dCDP + ADP. This is Cytidylate kinase from Carboxydothermus hydrogenoformans (strain ATCC BAA-161 / DSM 6008 / Z-2901).